Here is a 399-residue protein sequence, read N- to C-terminus: Glutathione S-transferase LANCL1 (399 aa).

N-acetylalanine is present on A2. N6-acetyllysine is present on K142. Residue C276 coordinates Zn(2+). K317 is a binding site for glutathione. The Zn(2+) site is built by C322 and H323. 364–367 (RTPD) contacts glutathione.

This sequence belongs to the LanC-like protein family. In terms of assembly, interacts with the C-terminal of STOM. Interacts with the EPS8 SH3 domain. Interaction with EPS8 is inhibited by glutathione binding. (Microbial infection) Interacts with P.falciparum SBP1. In terms of tissue distribution, detected in erythrocytes, brain, kidney, testis, ovary, heart, lung, placenta and spleen (at protein level). Ubiquitous. Strongly expressed in brain, spinal cord, pituitary gland, kidney, heart, skeletal muscle, pancreas, ovary and testis.

It localises to the cytoplasm. It is found in the cell membrane. It catalyses the reaction RX + glutathione = an S-substituted glutathione + a halide anion + H(+). The enzyme catalyses 1-chloro-2,4-dinitrobenzene + glutathione = 2,4-dinitrophenyl-S-glutathione + chloride + H(+). Functions as a glutathione transferase. Catalyzes conjugation of the glutathione (GSH) to artificial substrates 1-chloro-2,4-dinitrobenzene (CDNB) and p-nitrophenyl acetate. Mitigates neuronal oxidative stress during normal postnatal development and in response to oxidative stresses probably through GSH antioxidant defense mechanism. May play a role in EPS8 signaling. Binds glutathione. The polypeptide is Glutathione S-transferase LANCL1 (Homo sapiens (Human)).